The following is an 843-amino-acid chain: Protein translocase subunit SecA (843 aa).

Residues Gln85, Gly103–Thr107, and Asp490 each bind ATP. Positions Lys799–Lys834 are disordered. The segment covering Val802–Arg823 has biased composition (basic and acidic residues). 4 residues coordinate Zn(2+): Cys827, Cys829, Cys838, and Cys839.

It belongs to the SecA family. Monomer and homodimer. Part of the essential Sec protein translocation apparatus which comprises SecA, SecYEG and auxiliary proteins SecDF. Other proteins may also be involved. The cofactor is Zn(2+).

Its subcellular location is the cell membrane. The protein resides in the cytoplasm. It catalyses the reaction ATP + H2O + cellular proteinSide 1 = ADP + phosphate + cellular proteinSide 2.. Its function is as follows. Part of the Sec protein translocase complex. Interacts with the SecYEG preprotein conducting channel. Has a central role in coupling the hydrolysis of ATP to the transfer of proteins into and across the cell membrane, serving as an ATP-driven molecular motor driving the stepwise translocation of polypeptide chains across the membrane. This Heliobacterium modesticaldum (strain ATCC 51547 / Ice1) protein is Protein translocase subunit SecA.